The sequence spans 165 residues: Endoribonuclease YbeY (165 aa).

Positions 119, 123, and 129 each coordinate Zn(2+).

It belongs to the endoribonuclease YbeY family. Zn(2+) is required as a cofactor.

The protein localises to the cytoplasm. In terms of biological role, single strand-specific metallo-endoribonuclease involved in late-stage 70S ribosome quality control and in maturation of the 3' terminus of the 16S rRNA. This chain is Endoribonuclease YbeY, found in Streptomyces coelicolor (strain ATCC BAA-471 / A3(2) / M145).